A 616-amino-acid chain; its full sequence is 2-isopropylmalate synthase (616 aa).

A disordered region spans residues 1 to 34; it reads MSPNDAFISAPAKIETPVGPRNEGQPAWNKQRGS. Residues 67 to 341 enclose the Pyruvate carboxyltransferase domain; the sequence is PQWCAVDLRD…DPQLDFTDIR (275 aa). Mg(2+)-binding residues include D76, H280, H282, and N316. Residues 490–616 form a regulatory domain region; the sequence is RTAPVEQIAL…NHEAVLAGGV (127 aa).

This sequence belongs to the alpha-IPM synthase/homocitrate synthase family. LeuA type 2 subfamily. In terms of assembly, homodimer. It depends on Mg(2+) as a cofactor.

It localises to the cytoplasm. The catalysed reaction is 3-methyl-2-oxobutanoate + acetyl-CoA + H2O = (2S)-2-isopropylmalate + CoA + H(+). It functions in the pathway amino-acid biosynthesis; L-leucine biosynthesis; L-leucine from 3-methyl-2-oxobutanoate: step 1/4. Functionally, catalyzes the condensation of the acetyl group of acetyl-CoA with 3-methyl-2-oxobutanoate (2-ketoisovalerate) to form 3-carboxy-3-hydroxy-4-methylpentanoate (2-isopropylmalate). This Corynebacterium glutamicum (strain R) protein is 2-isopropylmalate synthase.